We begin with the raw amino-acid sequence, 413 residues long: NADH-quinone oxidoreductase subunit D (413 aa).

Belongs to the complex I 49 kDa subunit family. As to quaternary structure, NDH-1 is composed of 14 different subunits. Subunits NuoB, C, D, E, F, and G constitute the peripheral sector of the complex.

The protein resides in the cell inner membrane. It carries out the reaction a quinone + NADH + 5 H(+)(in) = a quinol + NAD(+) + 4 H(+)(out). Its function is as follows. NDH-1 shuttles electrons from NADH, via FMN and iron-sulfur (Fe-S) centers, to quinones in the respiratory chain. The immediate electron acceptor for the enzyme in this species is believed to be ubiquinone. Couples the redox reaction to proton translocation (for every two electrons transferred, four hydrogen ions are translocated across the cytoplasmic membrane), and thus conserves the redox energy in a proton gradient. The sequence is that of NADH-quinone oxidoreductase subunit D from Rhodobacter capsulatus (Rhodopseudomonas capsulata).